Reading from the N-terminus, the 452-residue chain is Multifunctional glycoside hydrolase (452 aa).

Residues glutamine 17, histidine 118, and asparagine 162 each contribute to the substrate site. Catalysis depends on glutamate 163, which acts as the Proton donor. Substrate is bound at residue tyrosine 303. Glutamate 361 (nucleophile) is an active-site residue. Residues tryptophan 407 and 414 to 415 contribute to the substrate site; that span reads EW.

This sequence belongs to the glycosyl hydrolase 1 family. Monomer. Homotrimer.

The enzyme catalyses Hydrolysis of terminal, non-reducing beta-D-glucosyl residues with release of beta-D-glucose.. It carries out the reaction Hydrolysis of terminal non-reducing beta-D-galactose residues in beta-D-galactosides.. The catalysed reaction is Hydrolysis of (1-&gt;4)-beta-D-xylans, to remove successive D-xylose residues from the non-reducing termini.. It catalyses the reaction Hydrolysis of (1-&gt;4)-linkages in (1-&gt;4)-beta-D-glucans, to remove successive glucose units.. The enzyme catalyses Hydrolysis of (1-&gt;4)-beta-D-glucosidic linkages in cellulose and cellotetraose, releasing cellobiose from the non-reducing ends of the chains.. It participates in glycan metabolism; beta-D-glucan degradation. Its pathway is glycan metabolism; cellulose degradation. With respect to regulation, slight activation by Mn(2+), Ni(2+) and K(+). Slight inhibition by Fe(3+), Zn(2+), Co(2+), Mg(2+), Cu(2+), Na(+) and NH4(+). In terms of biological role, has high beta-D-glucosidase, exoglucanase, beta-D-xylosidase, beta-D-galactosidase, and transgalactosylation activities in vitro. Has a very broad substrate specificity with the highest activity with p-nitrophenyl beta-D-galactopyranoside (pNPGal) as substrate. Active with pNP-beta-D-glucopyranoside (pNPGlu), pNP-beta-D-cellobioside (pNPC), lactose, pNP-beta-D-xylopyranoside (pNPX) and cellobiose in the order of decreasing activity, respectively. Very low activity with soluble polysaccharides synanthrin and locust bean gum. Very low, but detectable activity with insoluble substrates such as cotton and filter paper. No activity with pNP-alpha-L-arabinofuranoside (pNPAr) or carboxymethylcellulose (CMC) as substrates. Synthesizes galactooligosaccharides (GalOS) from lactose. Hydrolyzes pretreated corn stover releasing both glucose and xylose. This multifunctional enzyme may provide C.owensensis the benefit of utilizing a wide variety of available carbon sources in its natural growing environment as the ability to convert a wide range of soluble oligosaccharides to monoses is required in order to assimilate them. The sequence is that of Multifunctional glycoside hydrolase from Caldicellulosiruptor owensensis (strain ATCC 700167 / DSM 13100 / OL).